The sequence spans 362 residues: Peptide chain release factor 1 (362 aa).

Gln-240 carries the N5-methylglutamine modification.

This sequence belongs to the prokaryotic/mitochondrial release factor family. In terms of processing, methylated by PrmC. Methylation increases the termination efficiency of RF1.

It is found in the cytoplasm. Its function is as follows. Peptide chain release factor 1 directs the termination of translation in response to the peptide chain termination codons UAG and UAA. This Bifidobacterium longum (strain NCC 2705) protein is Peptide chain release factor 1.